The chain runs to 308 residues: 4-hydroxyproline 2-epimerase (308 aa).

Catalysis depends on Cys88, which acts as the Proton acceptor. Residues 89-90, His208, and Asp232 each bind substrate; that span reads GH. Cys236 functions as the Proton donor in the catalytic mechanism. A substrate-binding site is contributed by 237–238; the sequence is GT.

It belongs to the proline racemase family.

The enzyme catalyses trans-4-hydroxy-L-proline = cis-4-hydroxy-D-proline. Catalyzes the epimerization of trans-4-hydroxy-L-proline (t4LHyp) to cis-4-hydroxy-D-proline (c4DHyp). Is likely involved in a degradation pathway that converts t4LHyp to alpha-ketoglutarate. Can also catalyze the epimerization of trans-3-hydroxy-L-proline (t3LHyp) to cis-3-hydroxy-D-proline (c3DHyp), albeit with 200-fold lower efficiency. The chain is 4-hydroxyproline 2-epimerase from Pseudomonas putida (strain ATCC 700007 / DSM 6899 / JCM 31910 / BCRC 17059 / LMG 24140 / F1).